Consider the following 478-residue polypeptide: UDP-N-acetylmuramate--L-alanine ligase (478 aa).

It belongs to the MurCDEF family.

It localises to the cytoplasm. The enzyme catalyses UDP-N-acetyl-alpha-D-muramate + L-alanine + ATP = UDP-N-acetyl-alpha-D-muramoyl-L-alanine + ADP + phosphate + H(+). It participates in cell wall biogenesis; peptidoglycan biosynthesis. In terms of biological role, cell wall formation. This Synechococcus elongatus (strain ATCC 33912 / PCC 7942 / FACHB-805) (Anacystis nidulans R2) protein is UDP-N-acetylmuramate--L-alanine ligase (murC).